A 401-amino-acid chain; its full sequence is Phosphoglycerate kinase (401 aa).

Residues 20–22 (DFN), Arg-35, 58–61 (HLGR), Arg-117, and Arg-154 each bind substrate. Residues Lys-204, Gly-298, Glu-329, and 358 to 361 (GGDS) each bind ATP.

Belongs to the phosphoglycerate kinase family. In terms of assembly, monomer.

It is found in the cytoplasm. It catalyses the reaction (2R)-3-phosphoglycerate + ATP = (2R)-3-phospho-glyceroyl phosphate + ADP. The protein operates within carbohydrate degradation; glycolysis; pyruvate from D-glyceraldehyde 3-phosphate: step 2/5. This chain is Phosphoglycerate kinase, found in Bifidobacterium longum subsp. infantis (strain ATCC 15697 / DSM 20088 / JCM 1222 / NCTC 11817 / S12).